A 160-amino-acid polypeptide reads, in one-letter code: Cytochrome b6-f complex subunit 4 (160 aa).

Transmembrane regions (helical) follow at residues 36–56 (LLYIFPVVILGTIACIVGLSV), 95–115 (LLGIALQTLVPLGLMLIPFIE), and 128–148 (IAMAVFLFGTATTIYLGIGAA).

It belongs to the cytochrome b family. PetD subfamily. The 4 large subunits of the cytochrome b6-f complex are cytochrome b6, subunit IV (17 kDa polypeptide, PetD), cytochrome f and the Rieske protein, while the 4 small subunits are PetG, PetL, PetM and PetN. The complex functions as a dimer.

It is found in the cellular thylakoid membrane. In terms of biological role, component of the cytochrome b6-f complex, which mediates electron transfer between photosystem II (PSII) and photosystem I (PSI), cyclic electron flow around PSI, and state transitions. The chain is Cytochrome b6-f complex subunit 4 from Synechococcus sp. (strain CC9311).